We begin with the raw amino-acid sequence, 38 residues long: Photosystem II reaction center protein L (38 aa).

The chain crosses the membrane as a helical span at residues 17-37 (SLYWGLLLIFVLAVLFSNYFF).

This sequence belongs to the PsbL family. As to quaternary structure, PSII is composed of 1 copy each of membrane proteins PsbA, PsbB, PsbC, PsbD, PsbE, PsbF, PsbH, PsbI, PsbJ, PsbK, PsbL, PsbM, PsbT, PsbX, PsbY, PsbZ, Psb30/Ycf12, at least 3 peripheral proteins of the oxygen-evolving complex and a large number of cofactors. It forms dimeric complexes.

The protein localises to the plastid. Its subcellular location is the chloroplast thylakoid membrane. Its function is as follows. One of the components of the core complex of photosystem II (PSII). PSII is a light-driven water:plastoquinone oxidoreductase that uses light energy to abstract electrons from H(2)O, generating O(2) and a proton gradient subsequently used for ATP formation. It consists of a core antenna complex that captures photons, and an electron transfer chain that converts photonic excitation into a charge separation. This subunit is found at the monomer-monomer interface and is required for correct PSII assembly and/or dimerization. This is Photosystem II reaction center protein L from Angiopteris evecta (Mule's foot fern).